Consider the following 104-residue polypeptide: ATP-dependent Clp protease adapter protein ClpS (104 aa).

The tract at residues methionine 1–threonine 20 is disordered.

The protein belongs to the ClpS family. In terms of assembly, binds to the N-terminal domain of the chaperone ClpA.

Functionally, involved in the modulation of the specificity of the ClpAP-mediated ATP-dependent protein degradation. This Desulfatibacillum aliphaticivorans protein is ATP-dependent Clp protease adapter protein ClpS.